Consider the following 272-residue polypeptide: HMP-PP phosphatase (272 aa).

Asp-8 serves as the catalytic Nucleophile. The Mg(2+) site is built by Asp-8, Asp-10, and Asp-212.

It belongs to the HAD-like hydrolase superfamily. Cof family. Mg(2+) serves as cofactor.

The catalysed reaction is 4-amino-2-methyl-5-(diphosphooxymethyl)pyrimidine + H2O = 4-amino-2-methyl-5-(phosphooxymethyl)pyrimidine + phosphate + H(+). Functionally, catalyzes the hydrolysis of 4-amino-2-methyl-5-hydroxymethylpyrimidine pyrophosphate (HMP-PP) to 4-amino-2-methyl-5-hydroxymethylpyrimidine phosphate (HMP-P). This Escherichia coli O6:H1 (strain CFT073 / ATCC 700928 / UPEC) protein is HMP-PP phosphatase.